Consider the following 279-residue polypeptide: Thermitase (279 aa).

Residue Asp-5 participates in Ca(2+) binding. Residues 12–277 (QYGPQKIQAP…KGRVNAYKAV (266 aa)) form the Peptidase S8 domain. Catalysis depends on Asp-38, which acts as the Charge relay system. Residues Asp-47, Asp-57, Asp-60, Asp-62, Thr-64, and Gln-66 each coordinate Ca(2+). His-71 serves as the catalytic Charge relay system. Residues Val-82, Asn-85, Thr-87, and Ile-89 each coordinate Ca(2+). Na(+) contacts are provided by Ala-173, Tyr-175, and Ala-178. Positions 199 and 201 each coordinate Ca(2+). Asp-201 contacts Na(+). The active-site Charge relay system is the Ser-225.

This sequence belongs to the peptidase S8 family. The cofactor is Ca(2+). Na(+) is required as a cofactor.

The protein resides in the secreted. The enzyme catalyses Hydrolysis of proteins, including collagen.. The sequence is that of Thermitase from Thermoactinomyces vulgaris.